Consider the following 461-residue polypeptide: CBL-interacting protein kinase 5 (461 aa).

In terms of domain architecture, Protein kinase spans 12 to 266 (YELGRMLGQG…VEKLVEHPWF (255 aa)). ATP contacts are provided by residues 18-26 (LGQGTFAKV) and Lys41. Residue Asp134 is the Proton acceptor of the active site. Positions 152-181 (DFGLSAFKECQKQDGLLHTTCGTPAYVAPE) are activation loop. An NAF domain is found at 300-334 (EGKAKEPASSLKPVSLNAFDIISLSKGFDLSGLFE). Positions 340 to 369 (KADSRFMTQKPASAIVSKLEQIAETESFKV) are PPI. The interval 440–461 (HPSLAQSSTLTQSSKSISRHAI) is disordered. Positions 442–455 (SLAQSSTLTQSSKS) are enriched in low complexity.

This sequence belongs to the protein kinase superfamily. CAMK Ser/Thr protein kinase family. SNF1 subfamily. It depends on Mn(2+) as a cofactor.

It catalyses the reaction L-seryl-[protein] + ATP = O-phospho-L-seryl-[protein] + ADP + H(+). The catalysed reaction is L-threonyl-[protein] + ATP = O-phospho-L-threonyl-[protein] + ADP + H(+). CIPK serine-threonine protein kinases interact with CBL proteins. Binding of a CBL protein to the regulatory NAF domain of CIPK protein lead to the activation of the kinase in a calcium-dependent manner. In Oryza sativa subsp. japonica (Rice), this protein is CBL-interacting protein kinase 5 (CIPK5).